The primary structure comprises 689 residues: Glycine--tRNA ligase beta subunit (689 aa).

This sequence belongs to the class-II aminoacyl-tRNA synthetase family. In terms of assembly, tetramer of two alpha and two beta subunits.

The protein localises to the cytoplasm. The catalysed reaction is tRNA(Gly) + glycine + ATP = glycyl-tRNA(Gly) + AMP + diphosphate. The polypeptide is Glycine--tRNA ligase beta subunit (Escherichia coli O7:K1 (strain IAI39 / ExPEC)).